Here is a 309-residue protein sequence, read N- to C-terminus: L-lactate dehydrogenase 2 (309 aa).

NAD(+) is bound by residues Val-16, Asp-37, Tyr-67, and 81 to 82 (GV). Arg-90 serves as a coordination point for substrate. Ser-103 lines the NAD(+) pocket. Residue 122–125 (NPVD) coordinates substrate. Thr-145 is an NAD(+) binding site. 150-153 (DTAR) is a substrate binding site. His-177 functions as the Proton acceptor in the catalytic mechanism. Residue Thr-227 participates in substrate binding.

This sequence belongs to the LDH/MDH superfamily. LDH family. In terms of assembly, homotetramer.

The protein localises to the cytoplasm. The catalysed reaction is (S)-lactate + NAD(+) = pyruvate + NADH + H(+). Its pathway is fermentation; pyruvate fermentation to lactate; (S)-lactate from pyruvate: step 1/1. In terms of biological role, catalyzes the conversion of lactate to pyruvate. This is L-lactate dehydrogenase 2 from Lactiplantibacillus plantarum (strain ATCC BAA-793 / NCIMB 8826 / WCFS1) (Lactobacillus plantarum).